We begin with the raw amino-acid sequence, 62 residues long: Photosystem II reaction center protein H (62 aa).

A helical membrane pass occupies residues 30–50 (PVMAGIGFMLLIFLVTILQIY).

The protein belongs to the PsbH family. As to quaternary structure, PSII is composed of 1 copy each of membrane proteins PsbA, PsbB, PsbC, PsbD, PsbE, PsbF, PsbH, PsbI, PsbJ, PsbK, PsbL, PsbM, PsbT, PsbX, PsbY, Psb30/Ycf12, peripheral proteins PsbO, CyanoQ (PsbQ), PsbU, PsbV and a large number of cofactors. It forms dimeric complexes.

The protein localises to the cellular thylakoid membrane. One of the components of the core complex of photosystem II (PSII), required for its stability and/or assembly. PSII is a light-driven water:plastoquinone oxidoreductase that uses light energy to abstract electrons from H(2)O, generating O(2) and a proton gradient subsequently used for ATP formation. It consists of a core antenna complex that captures photons, and an electron transfer chain that converts photonic excitation into a charge separation. The sequence is that of Photosystem II reaction center protein H from Prochlorococcus marinus (strain MIT 9303).